The chain runs to 166 residues: Large ribosomal subunit protein uL10 (166 aa).

This sequence belongs to the universal ribosomal protein uL10 family. Part of the ribosomal stalk of the 50S ribosomal subunit. The N-terminus interacts with L11 and the large rRNA to form the base of the stalk. The C-terminus forms an elongated spine to which L12 dimers bind in a sequential fashion forming a multimeric L10(L12)X complex.

Forms part of the ribosomal stalk, playing a central role in the interaction of the ribosome with GTP-bound translation factors. This Pseudomonas syringae pv. tomato (strain ATCC BAA-871 / DC3000) protein is Large ribosomal subunit protein uL10.